The chain runs to 273 residues: Putative pyruvate, phosphate dikinase regulatory protein (273 aa).

G153 to S160 is a binding site for ADP.

The protein belongs to the pyruvate, phosphate/water dikinase regulatory protein family. PDRP subfamily.

The catalysed reaction is N(tele)-phospho-L-histidyl/L-threonyl-[pyruvate, phosphate dikinase] + ADP = N(tele)-phospho-L-histidyl/O-phospho-L-threonyl-[pyruvate, phosphate dikinase] + AMP + H(+). The enzyme catalyses N(tele)-phospho-L-histidyl/O-phospho-L-threonyl-[pyruvate, phosphate dikinase] + phosphate + H(+) = N(tele)-phospho-L-histidyl/L-threonyl-[pyruvate, phosphate dikinase] + diphosphate. Functionally, bifunctional serine/threonine kinase and phosphorylase involved in the regulation of the pyruvate, phosphate dikinase (PPDK) by catalyzing its phosphorylation/dephosphorylation. This Ehrlichia ruminantium (strain Gardel) protein is Putative pyruvate, phosphate dikinase regulatory protein.